Reading from the N-terminus, the 151-residue chain is Probable cGMP 3',5'-cyclic phosphodiesterase subunit delta (151 aa).

The protein belongs to the PDE6D/unc-119 family. Interacts with Pde6.

It localises to the nucleus. It is found in the cytoplasm. This Culex quinquefasciatus (Southern house mosquito) protein is Probable cGMP 3',5'-cyclic phosphodiesterase subunit delta.